Here is a 189-residue protein sequence, read N- to C-terminus: Tumor protein p53-inducible protein 11 (189 aa).

Over 1-63 (MAAKQPPPLM…FAVREPLGLR (63 aa)) the chain is Cytoplasmic. Phosphoserine is present on Ser-14. A helical transmembrane segment spans residues 64-84 (VWQFLSAMLFSSVAIMALALP). The Extracellular segment spans residues 85–108 (DQLYDAVFDGAEVTSKTPIRLYGG). Residues 109-129 (ALLSISLIMWNALYTAEKVII) traverse the membrane as a helical segment. A topological domain (cytoplasmic) is located at residue Arg-130. A helical membrane pass occupies residues 131 to 151 (WTLLTEACYFGVQSLVVTATL). At 152–155 (AETG) the chain is on the extracellular side. The chain crosses the membrane as a helical span at residues 156 to 176 (LMSLGTLLLLASRLLFVIVSI). Topologically, residues 177–189 (YYYYQVGRKPKKV) are cytoplasmic.

The protein localises to the membrane. This is Tumor protein p53-inducible protein 11 (Tp53i11) from Rattus norvegicus (Rat).